The sequence spans 406 residues: MLNNRNVLLCVSGGIAVYKACALTSKLVQAGANVKVIMTESACRFVSPLTFQALSRHEVYTDTFKEQNPSVISHIDAADWADLIIVAPATANVIGKLANGIADDMLTTTLLAATAPVWIAPAMNVHMYDHPAVKRNISVLYQDGYCFIEPSEGYLACGYVGKGRLEEPENIVKLAEKHFAEETSAPLEGKHVVITAGPTREAIDPVRFFTNKSTGKMGYALAEAAVQLGARVILISGPVSLDQPKGLAEFIPVQSAADMREAVLSVYDASDIVIKTAAVADFTPKTVFDHKMKKQDGGMTLELKRTVDILKELGEKKKEQILVGFAAETQDIEHYARKKLAAKNLDLIVANDVKANGAGFGADTNIVTIFFKDGHKRELPIMSKLDVSFEILQEIAALSKQTGERS.

The interval 1-191 (MLNNRNVLLC…ETSAPLEGKH (191 aa)) is phosphopantothenoylcysteine decarboxylase. The active-site Proton donor is Cys-157. The phosphopantothenate--cysteine ligase stretch occupies residues 192-406 (VVITAGPTRE…ALSKQTGERS (215 aa)). CTP-binding residues include Asp-281, Lys-291, Phe-325, Lys-339, and Lys-343.

It in the N-terminal section; belongs to the HFCD (homo-oligomeric flavin containing Cys decarboxylase) superfamily. This sequence in the C-terminal section; belongs to the PPC synthetase family. The cofactor is Mg(2+). FMN is required as a cofactor.

It carries out the reaction N-[(R)-4-phosphopantothenoyl]-L-cysteine + H(+) = (R)-4'-phosphopantetheine + CO2. The catalysed reaction is (R)-4'-phosphopantothenate + L-cysteine + CTP = N-[(R)-4-phosphopantothenoyl]-L-cysteine + CMP + diphosphate + H(+). Its pathway is cofactor biosynthesis; coenzyme A biosynthesis; CoA from (R)-pantothenate: step 2/5. It functions in the pathway cofactor biosynthesis; coenzyme A biosynthesis; CoA from (R)-pantothenate: step 3/5. Catalyzes two sequential steps in the biosynthesis of coenzyme A. In the first step cysteine is conjugated to 4'-phosphopantothenate to form 4-phosphopantothenoylcysteine. In the second step the latter compound is decarboxylated to form 4'-phosphopantotheine. In Bacillus subtilis (strain 168), this protein is Coenzyme A biosynthesis bifunctional protein CoaBC.